A 349-amino-acid chain; its full sequence is 2-oxoglutarate-Fe(II) type oxidoreductase hxnY (349 aa).

In terms of domain architecture, Fe2OG dioxygenase spans 178–282; the sequence is GVATMRMLHY…RYSIPFFFSG (105 aa). H205, D207, and H263 together coordinate Fe cation. Residue R273 coordinates 2-oxoglutarate.

The protein belongs to the iron/ascorbate-dependent oxidoreductase family. Fe(2+) is required as a cofactor.

In terms of biological role, 2-oxoglutarate-Fe(II) type oxidoreductase, part of the hnx cluster involved in the purine degradation. The nicotinate hydroxylase hnxS accepts nicotinate as a substrate and catalyzes the first step of nicotinate catabolism. The major facilitator-type transporters hxnP and hxnZ are probably involved in the uptake of nicotinate-derived metabolites, and the oxidoreductases hxnT and hxnY in the further metabolism of 6-OH nicotinic acid. The protein is 2-oxoglutarate-Fe(II) type oxidoreductase hxnY of Emericella nidulans (strain FGSC A4 / ATCC 38163 / CBS 112.46 / NRRL 194 / M139) (Aspergillus nidulans).